Consider the following 133-residue polypeptide: Ribosome-binding factor A (133 aa).

This sequence belongs to the RbfA family. Monomer. Binds 30S ribosomal subunits, but not 50S ribosomal subunits or 70S ribosomes.

It localises to the cytoplasm. One of several proteins that assist in the late maturation steps of the functional core of the 30S ribosomal subunit. Associates with free 30S ribosomal subunits (but not with 30S subunits that are part of 70S ribosomes or polysomes). Required for efficient processing of 16S rRNA. May interact with the 5'-terminal helix region of 16S rRNA. This Chelativorans sp. (strain BNC1) protein is Ribosome-binding factor A.